Consider the following 896-residue polypeptide: Translation initiation factor IF-2 (896 aa).

The segment at 32–306 (LAQAGSSDTK…HKTKKQSEEH (275 aa)) is disordered. Polar residues-rich tracts occupy residues 35 to 48 (AGSSDTKNSPVSKA) and 114 to 126 (ADSTEPLSNSSQE). The segment covering 156–170 (ARNEETPIIRTRTEP) has biased composition (basic and acidic residues). The segment covering 213 to 237 (QQTRPSVETASTKQQQPSGTNTRPA) has biased composition (polar residues). The span at 256–280 (RGPDRDRTKRSDENVKAFTGRDRYG) shows a compositional bias: basic and acidic residues. Residues 401–570 (IRSPIVAFMG…ALQAEVLELK (170 aa)) form the tr-type G domain. Positions 410-417 (GHVDHGKT) are G1. 410-417 (GHVDHGKT) contributes to the GTP binding site. The tract at residues 435–439 (AITQH) is G2. The segment at 456–459 (DTPG) is G3. Residues 456 to 460 (DTPGH) and 510 to 513 (NKCD) each bind GTP. The interval 510 to 513 (NKCD) is G4. Residues 546–548 (SAK) are G5.

Belongs to the TRAFAC class translation factor GTPase superfamily. Classic translation factor GTPase family. IF-2 subfamily.

Its subcellular location is the cytoplasm. Functionally, one of the essential components for the initiation of protein synthesis. Protects formylmethionyl-tRNA from spontaneous hydrolysis and promotes its binding to the 30S ribosomal subunits. Also involved in the hydrolysis of GTP during the formation of the 70S ribosomal complex. The polypeptide is Translation initiation factor IF-2 (infB) (Chlamydia muridarum (strain MoPn / Nigg)).